A 216-amino-acid polypeptide reads, in one-letter code: Soluble inorganic pyrophosphatase 4 (216 aa).

At serine 18 the chain carries Phosphoserine. 2 residues coordinate substrate: lysine 66 and arginine 80. The Proton donor role is filled by tyrosine 88. Tyrosine 92 contacts substrate. 3 residues coordinate Mg(2+): aspartate 102, aspartate 107, and aspartate 139. Tyrosine 176 provides a ligand contact to substrate.

It belongs to the PPase family. In terms of assembly, monomer. Requires Mg(2+) as cofactor. In terms of tissue distribution, ubiquitous, excepted in pollen. Very low expression in cork, xylem and hypocotyls.

Its subcellular location is the cytoplasm. The enzyme catalyses diphosphate + H2O = 2 phosphate + H(+). Inhibited by Zn(2+), Ca(2+), Ba(2+), Fe(2+), Co(2+), Cu(2+), Eu(2+), Eu(3+) and Mn(2+). In terms of biological role, catalyzes the irreversible hydrolysis of pyrophosphate (PPi) to phosphate. The MgPPi(2-) complex binds to the enzyme only after a free Mg(2+) ion has bound. No activity with glycerol-3-phosphate, glucose-6-phosphate, p-nitrophenylphosphate, ADP, NADP(+), NAD(+),NADH, NADPH or phosphoribosyl pyrophosphate as substrates. This chain is Soluble inorganic pyrophosphatase 4, found in Arabidopsis thaliana (Mouse-ear cress).